A 214-amino-acid polypeptide reads, in one-letter code: dITP/XTP pyrophosphatase (214 aa).

A substrate-binding site is contributed by Thr-16 to Lys-21. Positions 48 and 77 each coordinate Mg(2+). Catalysis depends on Asp-77, which acts as the Proton acceptor. Substrate contacts are provided by residues Ser-78, Phe-163–Asp-166, Lys-186, and His-198–Arg-199.

This sequence belongs to the HAM1 NTPase family. As to quaternary structure, homodimer. Requires Mg(2+) as cofactor.

It carries out the reaction XTP + H2O = XMP + diphosphate + H(+). It catalyses the reaction dITP + H2O = dIMP + diphosphate + H(+). The catalysed reaction is ITP + H2O = IMP + diphosphate + H(+). Pyrophosphatase that catalyzes the hydrolysis of nucleoside triphosphates to their monophosphate derivatives, with a high preference for the non-canonical purine nucleotides XTP (xanthosine triphosphate), dITP (deoxyinosine triphosphate) and ITP. Seems to function as a house-cleaning enzyme that removes non-canonical purine nucleotides from the nucleotide pool, thus preventing their incorporation into DNA/RNA and avoiding chromosomal lesions. The sequence is that of dITP/XTP pyrophosphatase from Bradyrhizobium sp. (strain BTAi1 / ATCC BAA-1182).